Here is a 191-residue protein sequence, read N- to C-terminus: Cell division protein SepF (191 aa).

Residues E156–G167 show a composition bias toward polar residues. Residues E156–L191 are disordered.

It belongs to the SepF family. In terms of assembly, homodimer. Interacts with FtsZ.

The protein localises to the cytoplasm. Functionally, cell division protein that is part of the divisome complex and is recruited early to the Z-ring. Probably stimulates Z-ring formation, perhaps through the cross-linking of FtsZ protofilaments. Its function overlaps with FtsA. The chain is Cell division protein SepF from Prochlorococcus marinus (strain NATL1A).